Here is a 548-residue protein sequence, read N- to C-terminus: Alpha-1,3-mannosyl-glycoprotein 4-beta-N-acetylglucosaminyltransferase B (548 aa).

At 1–7 (MRLRNGT) the chain is on the cytoplasmic side. Residues 8 to 28 (FLTLLLFCLCAFLSLSWYAAL) traverse the membrane as a helical; Signal-anchor for type II membrane protein segment. Topologically, residues 29 to 548 (SGQKGDVVDI…LSEIFLKKAD (520 aa)) are lumenal. Positions 36 to 83 (VDIYQREFLALRDRLHAAEQESLKRSKELNLVLEEIKRAVSERQALRD) form a coiled coil. N-linked (GlcNAc...) asparagine glycans are attached at residues Asn87 and Asn103.

Belongs to the glycosyltransferase 54 family. Interacts with SLC35A3. A divalent metal cation serves as cofactor. Post-translationally, N-glycosylated.

Its subcellular location is the golgi apparatus membrane. It catalyses the reaction N(4)-{beta-D-GlcNAc-(1-&gt;2)-alpha-D-Man-(1-&gt;3)-[beta-D-GlcNAc-(1-&gt;2)-alpha-D-Man-(1-&gt;6)]-beta-D-Man-(1-&gt;4)-beta-D-GlcNAc-(1-&gt;4)-beta-D-GlcNAc}-L-asparaginyl-[protein] + UDP-N-acetyl-alpha-D-glucosamine = N(4)-{beta-D-GlcNAc-(1-&gt;2)-[beta-D-GlcNAc-(1-&gt;4)]-alpha-D-Man-(1-&gt;3)-[beta-D-GlcNAc-(1-&gt;2)-alpha-D-Man-(1-&gt;6)]-beta-D-Man-(1-&gt;4)-beta-D-GlcNAc-(1-&gt;4)-beta-D-GlcNAc}-L-asparaginyl-[protein] + UDP + H(+). The enzyme catalyses an N(4)-{beta-D-GlcNAc-(1-&gt;2)-alpha-D-Man-(1-&gt;3)-[alpha-D-Man-(1-&gt;6)]-beta-D-Man-(1-&gt;4)-beta-D-GlcNAc-(1-&gt;4)-beta-D-GlcNAc}-L-asparaginyl-[protein] + UDP-N-acetyl-alpha-D-glucosamine = an N(4)-{beta-D-GlcNAc-(1-&gt;2)-[beta-D-GlcNAc-(1-&gt;4)]-alpha-D-Man-(1-&gt;3)-[alpha-D-Man-(1-&gt;6)]-beta-D-Man-(1-&gt;4)-beta-D-GlcNAc-(1-&gt;4)-beta-D-GlcNAc}-L-asparaginyl-[protein] + UDP + H(+). It carries out the reaction an N(4)-{beta-D-GlcNAc-(1-&gt;2)-alpha-D-Man-(1-&gt;3)-[beta-D-GlcNAc-(1-&gt;2)-[beta-D-GlcNAc-(1-&gt;6)]-alpha-D-Man-(1-&gt;6)]-beta-D-Man-(1-&gt;4)-beta-D-GlcNAc-(1-&gt;4)-beta-D-GlcNAc}-L-asparaginyl-[protein] + UDP-N-acetyl-alpha-D-glucosamine = an N(4)-{beta-D-GlcNAc-(1-&gt;2)-[beta-D-GlcNAc-(1-&gt;4)]-alpha-D-Man-(1-&gt;3)-[beta-D-GlcNAc-(1-&gt;2)-[beta-D-GlcNAc-(1-&gt;6)]-alpha-D-Man-(1-&gt;6)]-beta-D-Man-(1-&gt;4)-beta-D-GlcNAc-(1-&gt;4)-beta-D-GlcNAc}-L-asparaginyl-[protein] + UDP + H(+). The catalysed reaction is an N(4)-{beta-D-GlcNAc-(1-&gt;2)-alpha-D-Man-(1-&gt;3)-[beta-D-GlcNAc-(1-&gt;2)-alpha-D-Man-(1-&gt;6)]-beta-D-Man-(1-&gt;4)-beta-D-GlcNAc-(1-&gt;4)-[alpha-L-Fuc-(1-&gt;6)]-beta-D-GlcNAc}-L-asparaginyl-[protein] + UDP-N-acetyl-alpha-D-glucosamine = N(4)-{beta-D-GlcNAc-(1-&gt;2)-[beta-D-GlcNAc-(1-&gt;4)]-alpha-D-Man-(1-&gt;3)-[beta-D-GlcNAc-(1-&gt;2)-alpha-D-Man-(1-&gt;6)]-beta-D-Man-(1-&gt;4)-beta-D-GlcNAc-(1-&gt;4)-[alpha-L-Fuc-(1-&gt;6)]-beta-D-GlcNAc}-asparaginyl-[protein] + UDP + H(+). It catalyses the reaction an N(4)-{beta-D-GlcNAc-(1-&gt;2)-alpha-D-Man-(1-&gt;3)-[beta-D-Gal-(1-&gt;4)-beta-D-GlcNAc-(1-&gt;2)-alpha-D-Man-(1-&gt;6)]-beta-D-Man-(1-&gt;4)-beta-D-GlcNAc-(1-&gt;4)-beta-D-GlcNAc}-L-asparaginyl-[protein] + UDP-N-acetyl-alpha-D-glucosamine = an N(4)-{beta-D-GlcNAc-(1-&gt;2)-[beta-D-GlcNAc-(1-&gt;4)]-alpha-D-Man-(1-&gt;3)-[beta-D-Gal-(1-&gt;4)-beta-D-GlcNAc-(1-&gt;2)-alpha-D-Man-(1-&gt;6)]-beta-D-Man-(1-&gt;4)-beta-D-GlcNAc-(1-&gt;4)-beta-D-GlcNAc}-L-asparaginyl-[protein] + UDP + H(+). The enzyme catalyses N(4)-{beta-D-GlcNAc-(1-&gt;2)-alpha-D-Man-(1-&gt;3)-[alpha-D-Man-(1-&gt;3)-{alpha-D-Man-(1-&gt;6)}-alpha-D-Man-(1-&gt;6)]-beta-D-Man-(1-&gt;4)-beta-D-GlcNAc-(1-&gt;4)-beta-D-GlcNAc}-asparaginyl-[protein] + UDP-N-acetyl-alpha-D-glucosamine = N(4)-{beta-D-GlcNAc-(1-&gt;2)-[beta-D-GlcNAc-(1-&gt;4)]-alpha-D-Man-(1-&gt;3)-[alpha-D-Man-(1-&gt;3)-{alpha-D-Man-(1-&gt;6)}-alpha-D-Man-(1-&gt;6)]-beta-D-Man-(1-&gt;4)-beta-D-GlcNAc-(1-&gt;4)-beta-D-GlcNAc}-asparaginyl-[protein] + UDP + H(+). It carries out the reaction N(4)-{beta-D-GlcNAc-(1-&gt;2)-alpha-D-Man-(1-&gt;3)-beta-D-Man-(1-&gt;4)-beta-D-GlcNAc-(1-&gt;4)-beta-D-GlcNAc}-asparaginyl-[protein] + UDP-N-acetyl-alpha-D-glucosamine = N(4)-{beta-D-GlcNAc-(1-&gt;2)-[beta-D-GlcNAc-(1-&gt;4)]-alpha-D-Man-(1-&gt;3)-beta-D-Man-(1-&gt;4)-beta-D-GlcNAc-(1-&gt;4)-beta-D-GlcNAc}-asparaginyl-[protein] + UDP + H(+). It functions in the pathway protein modification; protein glycosylation. Functionally, glycosyltransferase that catalyzes the transfer of GlcNAc from UDP-GlcNAc to the GlcNAcbeta1-2Manalpha1-3 arm of the core structure of N-linked glycans through a beta1-4 linkage and participates in the production of tri- and tetra-antennary N-linked sugar chains. Prefers complex-type N-glycans over hybrid-types. Has lower affinities for donors or acceptors than MGAT4A, suggesting that, under physiological conditions, it is not the main contributor in N-glycan biosynthesis. The protein is Alpha-1,3-mannosyl-glycoprotein 4-beta-N-acetylglucosaminyltransferase B of Mus musculus (Mouse).